We begin with the raw amino-acid sequence, 229 residues long: Prolactin (229 aa).

An N-terminal signal peptide occupies residues 1-30 (MDSKGSAQKGSRLLLLLVVSNLLLCQGVVS). C34 and C41 are oxidised to a cystine. S56 is subject to Phosphoserine. The N-linked (GlcNAc...) asparagine; partial glycan is linked to N61. A phosphoserine mark is found at S64 and S120. 2 disulfides stabilise this stretch: C88/C204 and C221/C229.

The protein belongs to the somatotropin/prolactin family. Interacts with PRLR.

The protein resides in the secreted. In terms of biological role, prolactin acts primarily on the mammary gland by promoting lactation, mammogenesis, mitogenesis and osmoregulation. The polypeptide is Prolactin (PRL) (Ovis aries (Sheep)).